A 280-amino-acid polypeptide reads, in one-letter code: Lacto-N-neotetraose biosynthesis glycosyltransferase LgtE (280 aa).

The protein belongs to the glycosyltransferase 25 family.

The protein operates within glycan metabolism; lacto-N-neotetraose biosynthesis. Its pathway is bacterial outer membrane biogenesis; lipooligosaccharide biosynthesis. In terms of biological role, adds the first galactose to the lacto-N-tetraose chain in lipooligosaccharide (LOS). The protein is Lacto-N-neotetraose biosynthesis glycosyltransferase LgtE (lgtE) of Neisseria gonorrhoeae.